The sequence spans 140 residues: 6,7-dimethyl-8-ribityllumazine synthase (140 aa).

Residues phenylalanine 11, 42-44, and 66-68 each bind 5-amino-6-(D-ribitylamino)uracil; these read ALE and VVI. 71–72 contributes to the (2S)-2-hydroxy-3-oxobutyl phosphate binding site; sequence ET. The active-site Proton donor is the histidine 74. Asparagine 98 contacts 5-amino-6-(D-ribitylamino)uracil. A (2S)-2-hydroxy-3-oxobutyl phosphate-binding site is contributed by arginine 112.

It belongs to the DMRL synthase family.

The enzyme catalyses (2S)-2-hydroxy-3-oxobutyl phosphate + 5-amino-6-(D-ribitylamino)uracil = 6,7-dimethyl-8-(1-D-ribityl)lumazine + phosphate + 2 H2O + H(+). Its pathway is cofactor biosynthesis; riboflavin biosynthesis; riboflavin from 2-hydroxy-3-oxobutyl phosphate and 5-amino-6-(D-ribitylamino)uracil: step 1/2. Catalyzes the formation of 6,7-dimethyl-8-ribityllumazine by condensation of 5-amino-6-(D-ribitylamino)uracil with 3,4-dihydroxy-2-butanone 4-phosphate. This is the penultimate step in the biosynthesis of riboflavin. In Erythrobacter litoralis (strain HTCC2594), this protein is 6,7-dimethyl-8-ribityllumazine synthase.